The primary structure comprises 333 residues: MSKARVYTDVNVVRPKEYWDYESLVVQWGHQDDYEVVRKVGRGKYSEVFEGKNVNTNERCVIKILKPVKKKKIKREIKILQNLCGGPNIVKLYDIVRDEHSKTPSLVFEFVNSVDFKVLYPTLTDYDIRYYIYELLKALDFCHSQGIMHRDVKPHNVMIDHQLRKLRLIDWGLAEFYHPGKEYNVRVASRYFKGPELLVDLQDYDYSLDMWSLGCMFAGMIFRKEPFFYGHDNHDQLVKIAKVLGTNELDHYLNKYQLDLDPQLEALVGRHVPKPWSKFINADNQHLVSPEAIDFLDKLLQYDHQDRLTAREAMDHPYFAQVKAAESSRLRTQ.

Positions Y34–F319 constitute a Protein kinase domain. ATP contacts are provided by residues V40–V48 and K63. D151 serves as the catalytic Proton acceptor.

It belongs to the protein kinase superfamily. Ser/Thr protein kinase family. CK2 subfamily. In terms of assembly, heterotetramer of two catalytic alpha subunits and two regulatory beta subunits.

Its subcellular location is the nucleus. It is found in the nucleolus. The protein resides in the cytoplasm. The catalysed reaction is L-seryl-[protein] + ATP = O-phospho-L-seryl-[protein] + ADP + H(+). The enzyme catalyses L-threonyl-[protein] + ATP = O-phospho-L-threonyl-[protein] + ADP + H(+). Its function is as follows. Casein kinases are operationally defined by their preferential utilization of acidic proteins such as caseins as substrates. The alpha chain contains the catalytic site. The tetrameric holoenzyme CK2 is composed of two alpha and two beta subunits. Acts as a circadian clock component that maintains the correct period length through phosphorylation of CCA1. The protein is Casein kinase II subunit alpha-3 of Arabidopsis thaliana (Mouse-ear cress).